We begin with the raw amino-acid sequence, 332 residues long: Acryloyl-coenzyme A reductase (332 aa).

Cysteine 38 contributes to the Zn(2+) binding site. Tyrosine 39 lines the NADP(+) pocket. Zn(2+)-binding residues include histidine 60, aspartate 90, cysteine 93, cysteine 96, cysteine 104, and cysteine 146. NADP(+) contacts are provided by residues 172–175 (SGGV) and 194–196 (TTS).

This sequence belongs to the zinc-containing alcohol dehydrogenase family. Monomer. Zn(2+) serves as cofactor.

The catalysed reaction is propanoyl-CoA + NADP(+) = acryloyl-CoA + NADPH + H(+). Functionally, plays a role in autotrophic carbon fixation via the 3-hydroxypropionate/4-hydroxybutyrate cycle. Catalyzes the acryloyl-CoA dependent NADPH oxidation and formation of propionyl-CoA. The sequence is that of Acryloyl-coenzyme A reductase from Metallosphaera sedula (strain ATCC 51363 / DSM 5348 / JCM 9185 / NBRC 15509 / TH2).